The chain runs to 81 residues: uncharacterized protein (81 aa).

Positions methionine 1–proline 24 are cleaved as a signal peptide. At asparagine 25–leucine 28 the chain is on the extracellular side. Residues phenylalanine 29 to valine 49 form a helical membrane-spanning segment. Residues lysine 50 to isoleucine 81 lie on the Cytoplasmic side of the membrane.

It is found in the cell membrane. This is an uncharacterized protein from Bacillus subtilis (strain 168).